A 2259-amino-acid chain; its full sequence is Putative Polycomb group protein ASXL3 (2259 aa).

One can recognise an HTH HARE-type domain in the interval 10–83 (RTWAEAARLA…KSGLYALRKE (74 aa)). A disordered region spans residues 181 to 230 (VVLTPLKVSDEQSDSPSGSESKNGEADSSDKEMKHGQKSPTGKQTSQHLK). Residues 202-215 (KNGEADSSDKEMKH) are compositionally biased toward basic and acidic residues. Positions 218-227 (KSPTGKQTSQ) are enriched in polar residues. Residues 253–362 (PGSILVNTNL…FERFYGERSG (110 aa)) enclose the DEUBAD domain. Disordered stretches follow at residues 364 to 399 (SREE…AQNA), 607 to 643 (CISE…CTPA), 703 to 810 (EASP…IPEP), 857 to 1012 (SEMT…PLKI), 1025 to 1049 (SQPV…NTGA), 1126 to 1150 (RLPS…TKME), 1433 to 1462 (LSGE…GGFV), 1614 to 1643 (DPMR…GLKA), 1687 to 1719 (DFPG…TTSP), and 1993 to 2075 (NMLS…TTKR). 3 stretches are compositionally biased toward polar residues: residues 607-617 (CISETSFSSES), 630-643 (GETQ…CTPA), and 703-717 (EASP…SEAS). Over residues 722 to 741 (LPPTSETSSESSMPLTSETP) the composition is skewed to low complexity. 2 stretches are compositionally biased toward polar residues: residues 770 to 781 (KSPSGSEEANSP) and 926 to 945 (QSST…SEPS). Composition is skewed to basic and acidic residues over residues 949-985 (DGIR…DDQS) and 995-1006 (PEKEQPPREEPR). A compositionally biased stretch (low complexity) spans 1034-1043 (RASTSTSVSS). The segment covering 1437-1448 (NLDNNSGPLNRT) has biased composition (polar residues). Over residues 1699-1719 (EVTSSASVQPTQTMKPSTTSP) the composition is skewed to polar residues. Residues 2023-2055 (PLPPPPPPPPPPPPPLALPPPPPPPPPLPPPLP) show a composition bias toward pro residues. The segment at 2221–2258 (ELKCSCRLKAMIVCKGCGAFCHDDCIGPSKLCVACLVV) adopts a PHD-type; atypical zinc-finger fold.

This sequence belongs to the Asx family. Core component of the polycomb repressive deubiquitinase (PR-DUB) complex, at least composed of BAP1, one of ASXL1, ASXL2 or (probably) ASXL3, and one of MBD5 or MBD6. Distinct combinations of ASXL and MBD proteins may preferentially bind specific histone modification marks. The PR-DUB core associates with a number of accessory proteins, including FOXK1, FOXK2, KDM1B, HCFC1 and OGT; KDM1B specifically associates with ASXL2 PR-DUB complexes. Interacts (via PHD domain) with MBD5 and MBD6 (via MBD domain); the interaction is probably direct and mediates association of MBD proteins with the PR-DUB core.

It is found in the nucleus. Putative Polycomb group (PcG) protein. PcG proteins act by forming multiprotein complexes, which are required to maintain the transcriptionally repressive state of homeotic genes throughout development. PcG proteins are not required to initiate repression, but to maintain it during later stages of development. They probably act via methylation of histones, rendering chromatin heritably changed in its expressibility. Non-catalytic component of the PR-DUB complex, a complex that specifically mediates deubiquitination of histone H2A monoubiquitinated at 'Lys-119' (H2AK119ub1). The PR-DUB complex is an epigenetic regulator of gene expression and acts as a transcriptional coactivator, affecting genes involved in development, cell communication, signaling, cell proliferation and cell viability. ASXL1, ASXL2 and ASXL3 function redundantly in the PR-DUB complex and are essential for chromatin recruitment and transcriptional activation of associated genes. This chain is Putative Polycomb group protein ASXL3 (Asxl3), found in Mus musculus (Mouse).